Here is a 409-residue protein sequence, read N- to C-terminus: MLMNIVTLISWDFKRNNESFQRAIINGYDYWSRILDDHGVEKYVILLTCNRVELYYRGDPFDVQEKGYNIISDDMAINHLFHVAAGLDSMSIGENEVLKQVKQAYEKSSSMGKSDKFLSLIFQRAISVGKLVRSKTGIGKGKVSIPSIVYDIVRKNGGNKILLVGNGMLASEIAPYFSYPQYKVTVAGRNIDHVRAFAEKYEYEYVLINDIDSLIKNNDVIITATSSKTPIVEERSLMPGKLFIDLGNPPNIERGNNVITLDEIYEISKKNEMLREEKINQAEILIENEMKATMNKIKDLMIDDIFSQFYRFASVVQTMEIQKFRKMHPEVNENDLEALAHSIINKILNVPVTTLKAVSRSQGNSDFNRLFESFSSNFNDIVSAALQSYEGLRDTQSLRDRTRQLLQKS.

Residues 48–51, S89, 94–96, and Q100 contribute to the substrate site; these read TCNR and ENE. C49 acts as the Nucleophile in catalysis. Residue 165–170 participates in NADP(+) binding; the sequence is GNGMLA.

The protein belongs to the glutamyl-tRNA reductase family. Homodimer.

It carries out the reaction (S)-4-amino-5-oxopentanoate + tRNA(Glu) + NADP(+) = L-glutamyl-tRNA(Glu) + NADPH + H(+). Its pathway is porphyrin-containing compound metabolism; protoporphyrin-IX biosynthesis; 5-aminolevulinate from L-glutamyl-tRNA(Glu): step 1/2. Its function is as follows. Catalyzes the NADPH-dependent reduction of glutamyl-tRNA(Glu) to glutamate 1-semialdehyde (GSA). This Thermoplasma volcanium (strain ATCC 51530 / DSM 4299 / JCM 9571 / NBRC 15438 / GSS1) protein is Glutamyl-tRNA reductase.